Consider the following 230-residue polypeptide: UPF0173 metal-dependent hydrolase Rsph17025_2229 (230 aa).

The protein belongs to the UPF0173 family.

This chain is UPF0173 metal-dependent hydrolase Rsph17025_2229, found in Cereibacter sphaeroides (strain ATCC 17025 / ATH 2.4.3) (Rhodobacter sphaeroides).